We begin with the raw amino-acid sequence, 629 residues long: Polyadenylate-binding protein, cytoplasmic and nuclear (629 aa).

The span at 1 to 11 (MSAAETNQLQE) shows a compositional bias: polar residues. Residues 1-48 (MSAAETNQLQESMEKLNIGSTTEEQSAAAATTTADQSAEEQGESSGVA) are disordered. Low complexity predominate over residues 20 to 36 (STTEEQSAAAATTTADQ). 4 consecutive RRM domains span residues 52–130 (ASLY…WSQR), 140–217 (GNIF…KHIS), 233–310 (TNIY…RAQK), and 336–413 (VNLF…LAQR). The interval 503-534 (PPQFQQDFNGQNMRPQQQQQQQPRGGYYPNRN) is disordered. Residues 505–517 (QFQQDFNGQNMRP) are compositionally biased toward polar residues. Residues 537 to 618 (SKRDLAAIIS…ALTAFEEYKK (82 aa)) form the PABC domain.

It belongs to the polyadenylate-binding protein type-1 family.

It is found in the cytoplasm. The protein localises to the nucleus. In terms of biological role, binds the poly(A) tail of mRNA. Appears to be an important mediator of the multiple roles of the poly(A) tail in mRNA biogenesis, stability and translation. In the nucleus, involved in both mRNA cleavage and polyadenylation. Is also required for efficient mRNA export to the cytoplasm. Acts in concert with a poly(A)-specific nuclease (PAN) to affect poly(A) tail shortening, which may occur concomitantly with either nucleocytoplasmic mRNA transport or translational initiation. In the cytoplasm, stimulates translation initiation and regulates mRNA decay through translation termination-coupled poly(A) shortening, probably mediated by PAN. This is Polyadenylate-binding protein, cytoplasmic and nuclear (PAB1) from Candida albicans (strain SC5314 / ATCC MYA-2876) (Yeast).